A 172-amino-acid chain; its full sequence is MLAKVERIDPSELELNDKLIFINRVTKVVKGGKRMGFAALVVTGDGKNHVGIGVGKAKEVPSAISKASANAKRNLSRILLNGTTVPHEIVFKYGAAQVLLKPAAPGTGIIAGGSVRAVLESTGIKDVLTKSMGCSNKANVAKATLGGLTAMRDPKATVTKRRSSLKEEATGG.

One can recognise an S5 DRBM domain in the interval 15–78 (LNDKLIFINR…ANAKRNLSRI (64 aa)).

The protein belongs to the universal ribosomal protein uS5 family. In terms of assembly, part of the 30S ribosomal subunit. Contacts proteins S4 and S8.

With S4 and S12 plays an important role in translational accuracy. Functionally, located at the back of the 30S subunit body where it stabilizes the conformation of the head with respect to the body. In Dehalococcoides mccartyi (strain CBDB1), this protein is Small ribosomal subunit protein uS5.